The primary structure comprises 291 residues: Phosphate-binding protein PstS 2 (291 aa).

Residues 1-21 (MKFKKMLTLAAIGLSGFGLVA) form the signal peptide. Cysteine 22 carries N-palmitoyl cysteine lipidation. Cysteine 22 is lipidated: S-diacylglycerol cysteine.

The protein belongs to the PstS family. The complex is composed of two ATP-binding proteins (PstB), two transmembrane proteins (PstC and PstA) and a solute-binding protein (PstS).

The protein resides in the cell membrane. Functionally, part of the ABC transporter complex PstSACB involved in phosphate import. This Streptococcus pneumoniae serotype 4 (strain ATCC BAA-334 / TIGR4) protein is Phosphate-binding protein PstS 2 (pstS2).